The chain runs to 305 residues: Mitogen-activated protein kinase kinase 10 (305 aa).

Ser-34 carries the phosphoserine modification. Positions 48 to 302 (LEKLSVLGQG…VEELLRHSFV (255 aa)) constitute a Protein kinase domain. Residues 54 to 62 (LGQGSGGTV) and Lys-77 each bind ATP. Asp-165 acts as the Proton acceptor in catalysis. A Phosphothreonine modification is found at Thr-200.

Belongs to the protein kinase superfamily. STE Ser/Thr protein kinase family. MAP kinase kinase subfamily. In terms of assembly, interacts with P.syringae type III effector HopF2.

It carries out the reaction L-seryl-[protein] + ATP = O-phospho-L-seryl-[protein] + ADP + H(+). The enzyme catalyses L-threonyl-[protein] + ATP = O-phospho-L-threonyl-[protein] + ADP + H(+). It catalyses the reaction L-tyrosyl-[protein] + ATP = O-phospho-L-tyrosyl-[protein] + ADP + H(+). The protein is Mitogen-activated protein kinase kinase 10 (MKK10) of Arabidopsis thaliana (Mouse-ear cress).